The sequence spans 372 residues: Putative RING-H2 finger protein ATL21A (372 aa).

An N-terminal signal peptide occupies residues 1–20 (MTFSKQLFLYLFFLFPLLHA). The chain crosses the membrane as a helical span at residues 242-262 (IILLSIIGPLTIFATCIAVGV). An RING-type; atypical zinc finger spans residues 320 to 362 (CPICLSEYASKETVRCIPECDHCFHSECIDVWLKIHGSCPLCR).

It belongs to the RING-type zinc finger family. ATL subfamily.

The protein localises to the membrane. It catalyses the reaction S-ubiquitinyl-[E2 ubiquitin-conjugating enzyme]-L-cysteine + [acceptor protein]-L-lysine = [E2 ubiquitin-conjugating enzyme]-L-cysteine + N(6)-ubiquitinyl-[acceptor protein]-L-lysine.. It functions in the pathway protein modification; protein ubiquitination. The sequence is that of Putative RING-H2 finger protein ATL21A (ATL21A) from Arabidopsis thaliana (Mouse-ear cress).